The following is a 98-amino-acid chain: NADH-ubiquinone oxidoreductase chain 4L (98 aa).

A run of 3 helical transmembrane segments spans residues 1 to 21 (MSLV…GLLM), 29 to 49 (SLLC…LTIL), and 61 to 81 (IILL…LVMV).

The protein belongs to the complex I subunit 4L family. As to quaternary structure, core subunit of respiratory chain NADH dehydrogenase (Complex I) which is composed of 45 different subunits.

It localises to the mitochondrion inner membrane. The enzyme catalyses a ubiquinone + NADH + 5 H(+)(in) = a ubiquinol + NAD(+) + 4 H(+)(out). Core subunit of the mitochondrial membrane respiratory chain NADH dehydrogenase (Complex I) which catalyzes electron transfer from NADH through the respiratory chain, using ubiquinone as an electron acceptor. Part of the enzyme membrane arm which is embedded in the lipid bilayer and involved in proton translocation. The protein is NADH-ubiquinone oxidoreductase chain 4L (MT-ND4L) of Muntiacus feae (Fea's muntjac).